Reading from the N-terminus, the 221-residue chain is Probable GTP-binding protein EngB (221 aa).

In terms of domain architecture, EngB-type G spans 37-219; the sequence is QGIEIALAGR…RAAIVKLLRE (183 aa). Residues 45-52, 72-76, 97-100, 164-167, and 198-200 each bind GTP; these read GRSNVGKS, GRTQE, DMPG, TKTD, and TSS. Mg(2+) contacts are provided by Ser-52 and Thr-74.

Belongs to the TRAFAC class TrmE-Era-EngA-EngB-Septin-like GTPase superfamily. EngB GTPase family. Mg(2+) is required as a cofactor.

Its function is as follows. Necessary for normal cell division and for the maintenance of normal septation. This chain is Probable GTP-binding protein EngB, found in Afipia carboxidovorans (strain ATCC 49405 / DSM 1227 / KCTC 32145 / OM5) (Oligotropha carboxidovorans).